The chain runs to 192 residues: Fibroblast growth factor 4B (192 aa).

The signal sequence occupies residues 1-22 (MTVQLALVPILLLGTAAVMVHC).

This sequence belongs to the heparin-binding growth factors family.

The protein resides in the secreted. Its function is as follows. Plays an important role in the regulation of embryonic development, cell proliferation, and cell differentiation. Good candidate for an inducing factor with possible roles both in mesoderm induction at the blastula stage and in the formation of the anteroposterior axis at the gastrula stage. The sequence is that of Fibroblast growth factor 4B (fgf4-b) from Xenopus laevis (African clawed frog).